The following is a 271-amino-acid chain: Rhomboid-type serine protease 2 (271 aa).

The next 6 membrane-spanning stretches (helical) occupy residues 16-36 (GLAV…NLVY), 64-84 (HLSF…IVMF), 89-111 (GTLY…YCLI), 115-137 (LFPN…YFAV), 152-172 (FSFP…LLAP), and 176-196 (LPGH…ENWV). Ser-125 (nucleophile) is an active-site residue. His-179 is a catalytic residue. Residues 252-271 (HNTDTPAEPTFQGNGRVLGN) form a disordered region.

It belongs to the peptidase S54 family.

It localises to the golgi apparatus membrane. Its subcellular location is the golgi apparatus. The protein resides in the cis-Golgi network membrane. It carries out the reaction Cleaves type-1 transmembrane domains using a catalytic dyad composed of serine and histidine that are contributed by different transmembrane domains.. Probable rhomboid-type serine protease that catalyzes intramembrane proteolysis. This is Rhomboid-type serine protease 2 (RBD2) from Kluyveromyces lactis (strain ATCC 8585 / CBS 2359 / DSM 70799 / NBRC 1267 / NRRL Y-1140 / WM37) (Yeast).